We begin with the raw amino-acid sequence, 167 residues long: Ureidoglycolate lyase (167 aa).

This sequence belongs to the ureidoglycolate lyase family. As to quaternary structure, homodimer. Ni(2+) serves as cofactor.

It carries out the reaction (S)-ureidoglycolate = urea + glyoxylate. The protein operates within nitrogen metabolism; (S)-allantoin degradation. Functionally, catalyzes the catabolism of the allantoin degradation intermediate (S)-ureidoglycolate, generating urea and glyoxylate. Involved in the utilization of allantoin as nitrogen source. The protein is Ureidoglycolate lyase of Pseudomonas fluorescens (strain ATCC BAA-477 / NRRL B-23932 / Pf-5).